The sequence spans 249 residues: Homeobox-leucine zipper protein HOX6 (249 aa).

Residues 1–32 are disordered; it reads MDGEEDSEWMMMDVGGKGGKGGGGGGAADRKK. The span at 15–27 shows a compositional bias: gly residues; that stretch reads GGKGGKGGGGGGA. The homeobox DNA-binding region spans 27–86; that stretch reads AADRKKRFSEEQIKSLESMFATQTKLEPRQKLQLARELGLQPRQVAIWFQNKRARWKSKQ. The interval 85–129 is leucine-zipper; sequence KQLEREYSALRDDYDALLCSYESLKKEKLALIKQLEKLAEMLQEP. Positions 194 to 249 are disordered; the sequence is FLRPSSQHHPPPPHAGAGFTSSEPAADHQSFNFHSSWPSSTEQTCSSTPWWEFESE. The span at 212-242 shows a compositional bias: polar residues; it reads FTSSEPAADHQSFNFHSSWPSSTEQTCSSTP.

It belongs to the HD-ZIP homeobox family. Class I subfamily. Expressed in seedlings, roots, leaves, nodes, internodes, flowers and embryo.

Its subcellular location is the nucleus. In terms of biological role, probable transcription factor that binds to the DNA sequence 5'-CAAT[AT]ATTG-3'. In Oryza sativa subsp. indica (Rice), this protein is Homeobox-leucine zipper protein HOX6 (HOX6).